The following is an 858-amino-acid chain: Heat shock protein 105 kDa (858 aa).

Ser2 carries the N-acetylserine modification. N6-acetyllysine is present on Lys471. Disordered regions lie at residues 500–584 (KVPT…PPEA) and 796–858 (CEPV…MDLD). A compositionally biased stretch (acidic residues) spans 504–514 (EENEMSSEADM). A phosphoserine mark is found at Ser509 and Ser510. Polar residues predominate over residues 532–554 (QQDNSEAGTQPQVQTDAQQTSQS). Ser557 is subject to Phosphoserine. At Thr561 the chain carries Phosphothreonine. Composition is skewed to basic and acidic residues over residues 563 to 584 (EENKIPDADKANEKKVDQPPEA) and 805 to 814 (PKIESPKLER). Ser809 carries the phosphoserine modification. Position 815 is a phosphothreonine (Thr815). The span at 821-832 (IDKKEEDLEDKN) shows a compositional bias: basic and acidic residues. A compositionally biased stretch (polar residues) spans 849-858 (EKNSVNMDLD).

This sequence belongs to the heat shock protein 70 family. Interacts with HSPA8/HSC70. Interacts with HSPA1A (via NBD) and HSPA1B (via NBD). Phosphorylation on Ser-509 may be important for regulation of the HSPA8/HSC70 chaperone activity. In terms of tissue distribution, highly expressed in testis. Present at lower levels in most brain regions, except cerebellum. Overexpressed in cancer cells.

The protein resides in the cytoplasm. Acts as a nucleotide-exchange factor (NEF) for chaperone proteins HSPA1A and HSPA1B, promoting the release of ADP from HSPA1A/B thereby triggering client/substrate protein release. Prevents the aggregation of denatured proteins in cells under severe stress, on which the ATP levels decrease markedly. Inhibits HSPA8/HSC70 ATPase and chaperone activities. The chain is Heat shock protein 105 kDa (HSPH1) from Homo sapiens (Human).